Consider the following 162-residue polypeptide: Cytochrome c-type biogenesis protein CcmE (162 aa).

Over 1-8 (MNPVRKKR) the chain is Cytoplasmic. The helical; Signal-anchor for type II membrane protein transmembrane segment at 9-29 (LIIVLAIVVGVGAAVGLALSA) threads the bilayer. Residues 30–162 (LQQNINLFYT…GETSYNQEGK (133 aa)) are Periplasmic-facing. Heme contacts are provided by His124 and Tyr128. Basic and acidic residues predominate over residues 139 to 148 (DSGQLKHYEN). The interval 139–162 (DSGQLKHYENGKAAGETSYNQEGK) is disordered.

The protein belongs to the CcmE/CycJ family.

The protein localises to the cell inner membrane. Functionally, heme chaperone required for the biogenesis of c-type cytochromes. Transiently binds heme delivered by CcmC and transfers the heme to apo-cytochromes in a process facilitated by CcmF and CcmH. The sequence is that of Cytochrome c-type biogenesis protein CcmE from Pseudomonas aeruginosa (strain LESB58).